A 399-amino-acid chain; its full sequence is Immunoglobulin heavy constant gamma 1 (399 aa).

A disordered region spans residues 1 to 21; that stretch reads ASTKGPSVFPLAPSSKSTSGG. The CH1 stretch occupies residues 1 to 98; it reads ASTKGPSVFP…PSNTKVDKKV (98 aa). Residues 1–350 are Extracellular-facing; it reads ASTKGPSVFP…DGELDGLWTT (350 aa). Ig-like domains are found at residues 6–99, 121–220, and 229–325; these read PSVF…KKVE, PSVF…KTIS, and PQVY…KSLS. Cys-27 and Cys-83 are oxidised to a cystine. The interval 99–110 is hinge; the sequence is EPKSCDKTHTCP. The CH2 stretch occupies residues 111–223; the sequence is PCPAPELLGG…PIEKTISKAK (113 aa). Disulfide bonds link Cys-144-Cys-204 and Cys-250-Cys-308. N-linked (GlcNAc...) (complex) asparagine glycosylation is present at Asn-180. The CH3 stretch occupies residues 224–330; the sequence is GQPREPQVYT…QKSLSLSPEL (107 aa). Residues 351-371 traverse the membrane as a helical segment; sequence ITIFITLFLLSVCYSATVTFF. Over 372–399 the chain is Cytoplasmic; sequence KVKWIFSSVVDLKQTIIPDYRNMIGQGA.

As to quaternary structure, immunoglobulins are composed of two identical heavy chains and two identical light chains; disulfide-linked. Interacts with FCGR1A; this interaction mediates IgG effector functions on monocytes. Interacts with FCGR2A and FCGR3A. Post-translationally, glycosylation on Asn-180 is required for interaction with Fc receptors and ability to activate the complement pathway. (Microbial infection) Deglycosylation on Asn-180 by S.pyogenes EndoS or Endos2 endoglucosidases prevents interaction between immunoglobulin-gamma (IgG) and Fc receptors, impairing ability to activate the complement pathway.

The protein localises to the secreted. It localises to the cell membrane. In terms of biological role, constant region of immunoglobulin heavy chains. Immunoglobulins, also known as antibodies, are membrane-bound or secreted glycoproteins produced by B lymphocytes. In the recognition phase of humoral immunity, the membrane-bound immunoglobulins serve as receptors which, upon binding of a specific antigen, trigger the clonal expansion and differentiation of B lymphocytes into immunoglobulins-secreting plasma cells. Secreted immunoglobulins mediate the effector phase of humoral immunity, which results in the elimination of bound antigens. The antigen binding site is formed by the variable domain of one heavy chain, together with that of its associated light chain. Thus, each immunoglobulin has two antigen binding sites with remarkable affinity for a particular antigen. The variable domains are assembled by a process called V-(D)-J rearrangement and can then be subjected to somatic hypermutations which, after exposure to antigen and selection, allow affinity maturation for a particular antigen. Mediates IgG effector functions on monocytes triggering ADCC of virus-infected cells. In Homo sapiens (Human), this protein is Immunoglobulin heavy constant gamma 1.